The following is a 342-amino-acid chain: Strictosidine synthase (342 aa).

Residues 1–20 form the signal peptide; it reads KLSDSQTMALFTVFLLFLSS. The N-linked (GlcNAc...) asparagine glycan is linked to Asn89.

This sequence belongs to the strictosidine synthase family. As to quaternary structure, monomer.

It is found in the vacuole. The enzyme catalyses 3alpha(S)-strictosidine + H2O = secologanin + tryptamine. Its pathway is alkaloid biosynthesis; 3alpha(S)-strictosidine biosynthesis; 3alpha(S)-strictosidine from secologanin and tryptamine: step 1/1. In terms of biological role, catalyzes the stereospecific condensation of tryptamine with secologanin to form strictosidine, the key intermediate of indole alkaloid biosynthesis. This chain is Strictosidine synthase (STR1), found in Rauvolfia mannii.